A 360-amino-acid polypeptide reads, in one-letter code: Phospho-N-acetylmuramoyl-pentapeptide-transferase (360 aa).

Transmembrane regions (helical) follow at residues 21-41 (YLSF…LWMG), 73-93 (TMGG…WANL), 94-114 (SNPY…VGFV), 132-152 (WKYF…YAYG), 168-188 (VMPQ…VGTS), 199-219 (GLAI…AWAT), 236-256 (ASEL…FLWF), 263-283 (VFMG…IAVL), 288-308 (LVLV…ILQV), and 338-358 (VIVR…ATLK).

Belongs to the glycosyltransferase 4 family. MraY subfamily. It depends on Mg(2+) as a cofactor.

The protein localises to the cell inner membrane. The catalysed reaction is UDP-N-acetyl-alpha-D-muramoyl-L-alanyl-gamma-D-glutamyl-meso-2,6-diaminopimeloyl-D-alanyl-D-alanine + di-trans,octa-cis-undecaprenyl phosphate = di-trans,octa-cis-undecaprenyl diphospho-N-acetyl-alpha-D-muramoyl-L-alanyl-D-glutamyl-meso-2,6-diaminopimeloyl-D-alanyl-D-alanine + UMP. It functions in the pathway cell wall biogenesis; peptidoglycan biosynthesis. Catalyzes the initial step of the lipid cycle reactions in the biosynthesis of the cell wall peptidoglycan: transfers peptidoglycan precursor phospho-MurNAc-pentapeptide from UDP-MurNAc-pentapeptide onto the lipid carrier undecaprenyl phosphate, yielding undecaprenyl-pyrophosphoryl-MurNAc-pentapeptide, known as lipid I. In Vibrio vulnificus (strain YJ016), this protein is Phospho-N-acetylmuramoyl-pentapeptide-transferase.